We begin with the raw amino-acid sequence, 176 residues long: Dynein light chain Tctex-type 5-B (176 aa).

Belongs to the dynein light chain Tctex-type family.

This chain is Dynein light chain Tctex-type 5-B (Dynlt5-b), found in Xenopus laevis (African clawed frog).